A 426-amino-acid chain; its full sequence is Histidine--tRNA ligase (426 aa).

This sequence belongs to the class-II aminoacyl-tRNA synthetase family. In terms of assembly, homodimer.

It is found in the cytoplasm. It catalyses the reaction tRNA(His) + L-histidine + ATP = L-histidyl-tRNA(His) + AMP + diphosphate + H(+). The chain is Histidine--tRNA ligase from Streptococcus equi subsp. equi (strain 4047).